A 166-amino-acid chain; its full sequence is Regulatory protein RecX (166 aa).

Belongs to the RecX family.

It is found in the cytoplasm. Its function is as follows. Modulates RecA activity. This Escherichia fergusonii (strain ATCC 35469 / DSM 13698 / CCUG 18766 / IAM 14443 / JCM 21226 / LMG 7866 / NBRC 102419 / NCTC 12128 / CDC 0568-73) protein is Regulatory protein RecX.